We begin with the raw amino-acid sequence, 261 residues long: MADDGPIIEEIAEKNGRVARIMQRLQHDTQRVTSVPGFNTSATGYADLIALLDQYKNDLEAVGFNDLEQARRRAPSVDITVGSNSTNLVDYSHGRHDMPSHRRHDSSDEEITAANSHHQSPINVGNRNDTDGTNGRNGSRAGSSSSDRVRMIAGRNRISKTRRYRPGQKALEEIRKYQESEDLLIPKAPFARLVREIMQTSTPFSSDLRIRSDAINALQEASEALLVQMFDGSSLISAHSKRATLTTTDVQLYRRLCLPNL.

A disordered region spans residues 80-150; sequence TVGSNSTNLV…AGSSSSDRVR (71 aa). Over residues 113 to 127 the composition is skewed to polar residues; that stretch reads AANSHHQSPINVGNR. Residues 132-146 are compositionally biased toward low complexity; it reads GTNGRNGSRAGSSSS. The segment at 164–261 is H3-like; the sequence is YRPGQKALEE…LYRRLCLPNL (98 aa).

It belongs to the histone H3 family. As to quaternary structure, forms a nucleosome-like histone octamer containing two molecules each of H2A, H2B, cpar-1 and H4 assembled in one cpar-1-H4 heterotetramer and two H2A-H2B heterodimers. Post-translationally, cleaved at the onset of meiotic anaphase I, likely by separase sep-1.

It is found in the nucleus. It localises to the chromosome. Functionally, histone H3-like variant which exclusively replaces conventional H3 in the nucleosome core of centromeric chromatin at the inner plate of the kinetochore. Required for recruitment and assembly of kinetochore proteins, mitotic progression and chromosome segregation. May serve as an epigenetic mark that propagates centromere identity through replication and cell division. Not required for chromosome segregation during meiosis. The sequence is that of Histone H3-like centromeric protein cpar-1 from Caenorhabditis elegans.